Consider the following 207-residue polypeptide: Cytochrome c biogenesis ATP-binding export protein CcmA (207 aa).

The ABC transporter domain occupies 4 to 207 (LEARELLCER…RISLTQTGAA (204 aa)). 36 to 43 (GSNGAGKT) serves as a coordination point for ATP.

It belongs to the ABC transporter superfamily. CcmA exporter (TC 3.A.1.107) family. As to quaternary structure, the complex is composed of two ATP-binding proteins (CcmA) and two transmembrane proteins (CcmB).

Its subcellular location is the cell inner membrane. It carries out the reaction heme b(in) + ATP + H2O = heme b(out) + ADP + phosphate + H(+). Its function is as follows. Part of the ABC transporter complex CcmAB involved in the biogenesis of c-type cytochromes; once thought to export heme, this seems not to be the case, but its exact role is uncertain. Responsible for energy coupling to the transport system. This chain is Cytochrome c biogenesis ATP-binding export protein CcmA, found in Escherichia coli O6:H1 (strain CFT073 / ATCC 700928 / UPEC).